The chain runs to 304 residues: uncharacterized protein (304 aa).

Positions 1–10 (MLWAHRKKRK) are enriched in basic residues. A disordered region spans residues 1–28 (MLWAHRKKRKAATETTEDKPLESHRAND). The segment covering 16–27 (TEDKPLESHRAN) has biased composition (basic and acidic residues). The residue at position 39 (Ser39) is a Phosphoserine. The segment covering 91–101 (KQKISGSSMTK) has biased composition (polar residues). 3 disordered regions span residues 91–115 (KQKI…SMED), 138–160 (SMLQ…ISPE), and 190–304 (SHTV…IYGS). The segment covering 151 to 160 (HAESRNISPE) has biased composition (basic and acidic residues). Ser158 carries the post-translational modification Phosphoserine. Over residues 195-206 (SQSRHSNQSHHS) the composition is skewed to low complexity. The segment covering 208–223 (PSHQSNQSHPVYSSYQ) has biased composition (polar residues). The span at 229–248 (HLSPQSYPSYSSHQSHPGHS) shows a compositional bias: low complexity. Positions 249–263 (NHQGHSGLSSHQTHL) are enriched in polar residues. A compositionally biased stretch (low complexity) spans 264–292 (GHSNHQGHPGHSSHQSHQGQPGHPSHQSH).

This is an uncharacterized protein from Mus musculus (Mouse).